A 270-amino-acid polypeptide reads, in one-letter code: Putative pyruvate, phosphate dikinase regulatory protein 2 (270 aa).

Position 151–158 (151–158) interacts with ADP; the sequence is GVSRTSKT.

This sequence belongs to the pyruvate, phosphate/water dikinase regulatory protein family. PDRP subfamily.

The enzyme catalyses N(tele)-phospho-L-histidyl/L-threonyl-[pyruvate, phosphate dikinase] + ADP = N(tele)-phospho-L-histidyl/O-phospho-L-threonyl-[pyruvate, phosphate dikinase] + AMP + H(+). It carries out the reaction N(tele)-phospho-L-histidyl/O-phospho-L-threonyl-[pyruvate, phosphate dikinase] + phosphate + H(+) = N(tele)-phospho-L-histidyl/L-threonyl-[pyruvate, phosphate dikinase] + diphosphate. In terms of biological role, bifunctional serine/threonine kinase and phosphorylase involved in the regulation of the pyruvate, phosphate dikinase (PPDK) by catalyzing its phosphorylation/dephosphorylation. The protein is Putative pyruvate, phosphate dikinase regulatory protein 2 of Listeria monocytogenes serovar 1/2a (strain ATCC BAA-679 / EGD-e).